Reading from the N-terminus, the 206-residue chain is FMN-dependent NADH:quinone oxidoreductase (206 aa).

FMN-binding positions include Ser10 and 15-17 (SVS).

This sequence belongs to the azoreductase type 1 family. As to quaternary structure, homodimer. FMN serves as cofactor.

It catalyses the reaction 2 a quinone + NADH + H(+) = 2 a 1,4-benzosemiquinone + NAD(+). It carries out the reaction N,N-dimethyl-1,4-phenylenediamine + anthranilate + 2 NAD(+) = 2-(4-dimethylaminophenyl)diazenylbenzoate + 2 NADH + 2 H(+). Its function is as follows. Quinone reductase that provides resistance to thiol-specific stress caused by electrophilic quinones. Also exhibits azoreductase activity. Catalyzes the reductive cleavage of the azo bond in aromatic azo compounds to the corresponding amines. In Acidobacterium capsulatum (strain ATCC 51196 / DSM 11244 / BCRC 80197 / JCM 7670 / NBRC 15755 / NCIMB 13165 / 161), this protein is FMN-dependent NADH:quinone oxidoreductase.